The primary structure comprises 149 residues: Transcription antitermination protein NusB (149 aa).

The protein belongs to the NusB family.

Involved in transcription antitermination. Required for transcription of ribosomal RNA (rRNA) genes. Binds specifically to the boxA antiterminator sequence of the ribosomal RNA (rrn) operons. This chain is Transcription antitermination protein NusB, found in Acinetobacter baumannii (strain SDF).